The sequence spans 503 residues: Cytochrome P450 11B1, mitochondrial (503 aa).

Residues 1–24 (MALRAKAEVCMAAPWLSLQRARAL) constitute a mitochondrion transit peptide. Residue Cys-450 participates in heme binding.

It belongs to the cytochrome P450 family. Requires heme as cofactor.

Its subcellular location is the mitochondrion inner membrane. It catalyses the reaction a steroid + 2 reduced [adrenodoxin] + O2 + 2 H(+) = an 11beta-hydroxysteroid + 2 oxidized [adrenodoxin] + H2O. It carries out the reaction 11-deoxycortisol + 2 reduced [adrenodoxin] + O2 + 2 H(+) = cortisol + 2 oxidized [adrenodoxin] + H2O. The enzyme catalyses 21-hydroxyprogesterone + 2 reduced [adrenodoxin] + O2 + 2 H(+) = corticosterone + 2 oxidized [adrenodoxin] + H2O. The catalysed reaction is 21-hydroxyprogesterone + 2 reduced [adrenodoxin] + O2 + 2 H(+) = 18-hydroxy-11-deoxycorticosterone + 2 oxidized [adrenodoxin] + H2O. It catalyses the reaction 21-hydroxyprogesterone + 2 reduced [adrenodoxin] + O2 + 2 H(+) = 19-hydroxy-11-deoxycorticosterone + 2 oxidized [adrenodoxin] + H2O. It carries out the reaction cortisol + 2 reduced [adrenodoxin] + O2 + 2 H(+) = 18-hydroxycortisol + 2 oxidized [adrenodoxin] + H2O. The enzyme catalyses 11-deoxycortisol + 2 reduced [adrenodoxin] + O2 + 2 H(+) = 18-hydroxy-11-deoxycortisol + 2 oxidized [adrenodoxin] + H2O. Its pathway is steroid biosynthesis; glucocorticoid biosynthesis. It participates in steroid hormone biosynthesis. Its function is as follows. A cytochrome P450 monooxygenase involved in the biosynthesis of adrenal corticoids. Catalyzes a variety of reactions that are essential for many species, including detoxification, defense, and the formation of endogenous chemicals like steroid hormones. Steroid 11beta, 18- and 19-hydroxylase with preferred regioselectivity at 11beta, then 18, and lastly 19. Catalyzes the hydroxylation of 11-deoxycortisol and 11-deoxycorticosterone (21-hydroxyprogesterone) at 11beta position, yielding cortisol or corticosterone, respectively, but cannot produce aldosterone. Mechanistically, uses molecular oxygen inserting one oxygen atom into a substrate for hydroxylation and reducing the second into a water molecule. Two electrons are provided by NADPH via a two-protein mitochondrial transfer system comprising flavoprotein FDXR (adrenodoxin/ferredoxin reductase) and nonheme iron-sulfur protein FDX1 or FDX2 (adrenodoxin/ferredoxin). Due to its lack of 18-oxidation activity, it is incapable of generating aldosterone. Could also be involved in the androgen metabolic pathway. This chain is Cytochrome P450 11B1, mitochondrial (CYP11B1), found in Papio hamadryas ursinus (Chacma baboon).